The primary structure comprises 359 residues: Peptide chain release factor 1 (359 aa).

The residue at position 233 (glutamine 233) is an N5-methylglutamine.

This sequence belongs to the prokaryotic/mitochondrial release factor family. Methylated by PrmC. Methylation increases the termination efficiency of RF1.

It is found in the cytoplasm. Peptide chain release factor 1 directs the termination of translation in response to the peptide chain termination codons UAG and UAA. The protein is Peptide chain release factor 1 of Cytophaga hutchinsonii (strain ATCC 33406 / DSM 1761 / CIP 103989 / NBRC 15051 / NCIMB 9469 / D465).